A 346-amino-acid chain; its full sequence is Heparan sulfate glucosamine 3-O-sulfotransferase 5 (346 aa).

The Cytoplasmic segment spans residues 1 to 12; it reads MLFKQQVWLRQK. The helical; Signal-anchor for type II membrane protein transmembrane segment at 13–32 threads the bilayer; sequence LLVLGSLAVGSLLYLVARVG. Residues 33–346 are Lumenal-facing; that stretch reads SLDRLQPICP…QITGRTLNWP (314 aa). An N-linked (GlcNAc...) asparagine glycan is attached at Asn75. 100–104 is a 3'-phosphoadenylyl sulfate binding site; it reads KGGTR. Residues 122 to 128 and 155 to 158 contribute to the substrate site; these read EIHFFDN and KSPA. An N-linked (GlcNAc...) asparagine glycan is attached at Asn173. 3'-phosphoadenylyl sulfate is bound by residues Arg183 and Ser191. N-linked (GlcNAc...) asparagine glycosylation occurs at Asn204. 226-227 contributes to the substrate binding site; sequence YK. The N-linked (GlcNAc...) asparagine glycan is linked to Asn287. Tyr293 contributes to the 3'-phosphoadenylyl sulfate binding site. Residues Cys294 and Cys304 are joined by a disulfide bond. 3'-phosphoadenylyl sulfate is bound at residue 309–313; it reads KGRIH.

This sequence belongs to the sulfotransferase 1 family.

The protein resides in the golgi apparatus membrane. The enzyme catalyses alpha-D-glucosaminyl-[heparan sulfate](n) + 3'-phosphoadenylyl sulfate = 3-sulfo-alpha-D-glucosaminyl-[heparan sulfate](n) + adenosine 3',5'-bisphosphate + H(+). Its function is as follows. Sulfotransferase that utilizes 3'-phospho-5'-adenylyl sulfate (PAPS) to catalyze the transfer of a sulfo group to position 3 of glucosamine residues in heparan. Catalyzes the rate limiting step in the biosynthesis of heparan sulfate (HSact). This modification is a crucial step in the biosynthesis of anticoagulant heparan sulfate as it completes the structure of the antithrombin pentasaccharide binding site. Also generates GlcUA-GlcNS or IdoUA-GlcNS and IdoUA2S-GlcNH2. This is Heparan sulfate glucosamine 3-O-sulfotransferase 5 (Hs3st5) from Mus musculus (Mouse).